Reading from the N-terminus, the 115-residue chain is Large ribosomal subunit protein bL20 (115 aa).

The protein belongs to the bacterial ribosomal protein bL20 family.

Its function is as follows. Binds directly to 23S ribosomal RNA and is necessary for the in vitro assembly process of the 50S ribosomal subunit. It is not involved in the protein synthesizing functions of that subunit. The chain is Large ribosomal subunit protein bL20 from Chlorobium phaeobacteroides (strain BS1).